The chain runs to 558 residues: Sinalpyl alcohol oxidase Nec3 (558 aa).

An N-terminal signal peptide occupies residues 1 to 28 (MATMAILQRTFSFILIFSIALHLKSLFA). Residue 64–65 (TA) participates in FAD binding. N76 carries an N-linked (GlcNAc...) asparagine glycan. FAD is bound by residues 83 to 84 (ER), V131, S135, and 139 to 142 (NFGF). Residue N180 is glycosylated (N-linked (GlcNAc...) asparagine). V247 lines the FAD pocket. Residues N308, N386, and N473 are each glycosylated (N-linked (GlcNAc...) asparagine). A disulfide bridge links C433 with C484. Residue 492–493 (YH) participates in FAD binding. Catalysis depends on H493, which acts as the Proton donor. The active-site Proton acceptor is the N531. An FAD-binding site is contributed by 532–533 (PQ).

It belongs to the GMC oxidoreductase family. As to quaternary structure, monomer. Requires FAD as cofactor. As to expression, confined to nectaries.

The enzyme catalyses (E)-sinapyl alcohol + O2 = (E)-sinapaldehyde + H2O2. It participates in alkaloid biosynthesis. Its function is as follows. Involved in the production of blood-red nectar containing the alkaloid nesocodin and that serves as a visual attractant for pollinator visitation, including vertebrates such as Phelsuma geckos. The nectar is initially acidic and pale yellow, but slowly becomes alkaline before turning into red within 24 hours. Together with NEC1 and NEC2, facilitates the condensation of sinapaldehyde ((E)-3,5-dimethoxy-4-hydroxycinnamaldehyde) and proline to form nesocodin, a pigment with a stable imine bond. Catalyzes the conversion of sinapyl alcohol to sinapaldehyde. In Nesocodon mauritianus (Blue Mauritius bellflower), this protein is Sinalpyl alcohol oxidase Nec3.